A 714-amino-acid chain; its full sequence is Forkhead box protein P2 (714 aa).

Polar residues predominate over residues 1-28 (MMQESATETISNSSMNQNGMSTLSSQLD). Disordered stretches follow at residues 1–45 (MMQE…SEVS) and 280–338 (DNGI…TGAS). Positions 291–304 (TTNNSSSTTSSTTS) are enriched in low complexity. The span at 314–323 (SIVNGQSSVL) shows a compositional bias: polar residues. The span at 325–336 (ARRDSSSHEETG) shows a compositional bias: basic and acidic residues. The C2H2-type zinc-finger motif lies at 345–370 (GVCKWPGCESICEDFGQFLKHLNNEH). The segment at 387-408 (VQQLEIQLSKERERLQAMMTHL) is leucine-zipper. Residues 421–425 (PLNLV) form a CTBP1-binding region. A compositionally biased stretch (low complexity) spans 437-458 (TSPQSLPQTPTTPTAPVTPITQ). The segment at 437–464 (TSPQSLPQTPTTPTAPVTPITQGPSVIT) is disordered. The segment at residues 503–593 (RPPFTYATLI…SQKITGSPTL (91 aa)) is a DNA-binding region (fork-head). 2 disordered regions span residues 648 to 667 (LDHI…QPHI) and 677 to 714 (VIAE…EDLE). The span at 698 to 714 (LEDDREIEEEPLSEDLE) shows a compositional bias: acidic residues.

In terms of assembly, forms homodimers and heterodimers with FOXP1 and FOXP4. Dimerization is required for DNA-binding. Interacts with CTBP1. Interacts with FOXP1. Interacts with TBR1. Interacts with ZMYM2. Highest expression in lung. Lower expression in spleen, skeletal muscle, brain, kidney and small intestine.

Its subcellular location is the nucleus. Functionally, transcriptional repressor that may play a role in the specification and differentiation of lung epithelium. May also play a role in developing neural, gastrointestinal and cardiovascular tissues. Can act with CTBP1 to synergistically repress transcription but CTPBP1 is not essential. Plays a role in synapse formation by regulating SRPX2 levels. The polypeptide is Forkhead box protein P2 (Foxp2) (Mus musculus (Mouse)).